We begin with the raw amino-acid sequence, 269 residues long: uncharacterized protein (269 aa).

An HTH gntR-type domain is found at 5-73 (APKWRELADR…RGHGTVVRRK (69 aa)). Residues 33–52 (IRDLVEAGEGSKETVHRAYK) constitute a DNA-binding region (H-T-H motif).

Functionally, the imp locus inhibits the extrachromosomal maintenance of the Streptomyces plasmid SLP1. This is an uncharacterized protein from Streptomyces coelicolor (strain ATCC BAA-471 / A3(2) / M145).